A 296-amino-acid chain; its full sequence is Probable endonuclease 4 (296 aa).

The Zn(2+) site is built by His68, His109, Glu144, Asp178, His181, His213, Asp226, His228, and Glu258.

The protein belongs to the AP endonuclease 2 family. Requires Zn(2+) as cofactor.

It carries out the reaction Endonucleolytic cleavage to 5'-phosphooligonucleotide end-products.. In terms of biological role, endonuclease IV plays a role in DNA repair. It cleaves phosphodiester bonds at apurinic or apyrimidinic (AP) sites, generating a 3'-hydroxyl group and a 5'-terminal sugar phosphate. This is Probable endonuclease 4 from Staphylococcus aureus (strain MRSA252).